The sequence spans 354 residues: Ion-translocating oxidoreductase complex subunit D (354 aa).

The next 5 membrane-spanning stretches (helical) occupy residues 19-39, 40-60, 70-89, 94-116, and 123-143; these read IMLW…YYFG, FGVL…EFLV, FYIS…VAIP, YWII…GGLG, and AMVG…TWLA. T186 is modified (FMN phosphoryl threonine). The next 5 membrane-spanning stretches (helical) occupy residues 215–235, 242–262, 266–286, 300–320, and 321–341; these read LAGL…LFLV, WQIP…SWLF, MPSP…FFIA, LVFG…GGYP, and DGAA…DQYT.

The protein belongs to the NqrB/RnfD family. As to quaternary structure, the complex is composed of six subunits: RnfA, RnfB, RnfC, RnfD, RnfE and RnfG. The cofactor is FMN.

The protein resides in the cell inner membrane. Functionally, part of a membrane-bound complex that couples electron transfer with translocation of ions across the membrane. The sequence is that of Ion-translocating oxidoreductase complex subunit D from Mannheimia succiniciproducens (strain KCTC 0769BP / MBEL55E).